The primary structure comprises 805 residues: Leucine--tRNA ligase (805 aa).

Residues 40–51 (PYPSGAGLHVGH) carry the 'HIGH' region motif. Residues 576 to 580 (KMSKS) carry the 'KMSKS' region motif. K579 lines the ATP pocket.

Belongs to the class-I aminoacyl-tRNA synthetase family.

Its subcellular location is the cytoplasm. It carries out the reaction tRNA(Leu) + L-leucine + ATP = L-leucyl-tRNA(Leu) + AMP + diphosphate. This chain is Leucine--tRNA ligase, found in Brevibacillus brevis (strain 47 / JCM 6285 / NBRC 100599).